A 1309-amino-acid polypeptide reads, in one-letter code: Angiotensin-converting enzyme (1309 aa).

Positions 1-33 (MGAASGCRWPWPPLLPLLLMLLLPPPPLPVALA) are cleaved as a signal peptide. Topologically, residues 34–1259 (LDSALQPGNF…GLNLEEQQAR (1226 aa)) are extracellular. Residues Asn42, Asn58, Asn78, Asn115, Asn135, Asn150, and Asn164 are each glycosylated (N-linked (GlcNAc...) asparagine). 2 consecutive Peptidase M2 domains span residues 44 to 627 (TADE…LGWP) and 646 to 1225 (VSDE…LGWP). Cys161 and Cys169 form a disulfide bridge. Tyr235 serves as a coordination point for chloride. Asn322 carries an N-linked (GlcNAc...) asparagine glycan. A disulfide bond links Cys363 and Cys381. His394 contacts Zn(2+). Glu395 acts as the Proton acceptor 1 in catalysis. Zn(2+)-binding residues include His398 and Glu422. N-linked (GlcNAc...) asparagine glycosylation occurs at Asn512. The active-site Proton donor 1 is the His523. An N-linked (GlcNAc...) asparagine glycan is attached at Asn526. Position 532 (Arg532) interacts with chloride. Cys548 and Cys560 form a disulfide bridge. Residues Asn680, Asn698, Asn717, and Asn763 are each glycosylated (N-linked (GlcNAc...) asparagine). A disulfide bond links Cys760 and Cys766. Chloride is bound by residues Arg794 and Tyr832. Asn945 carries N-linked (GlcNAc...) asparagine glycosylation. Cys960 and Cys978 are disulfide-bonded. Residue His991 participates in Zn(2+) binding. Glu992 functions as the Proton acceptor 2 in the catalytic mechanism. Residues His995 and Glu1019 each contribute to the Zn(2+) site. Chloride contacts are provided by Trp1093 and Arg1097. His1121 (proton donor 2) is an active-site residue. Residue Arg1130 participates in chloride binding. The cysteines at positions 1146 and 1158 are disulfide-linked. Residues Asn1194 and Asn1228 are each glycosylated (N-linked (GlcNAc...) asparagine). Residues 1218-1259 (HGEKLGWPQYNWTPNSARLEGSFAGTGRVNFLGLNLEEQQAR) are juxtamembrane stalk. A helical transmembrane segment spans residues 1260 to 1280 (VGQWVLLFLGVTLLVATMGLT). Topologically, residues 1281–1309 (QRLFSIRHQILRRTHRGPQFGSEVELRHS) are cytoplasmic. Ser1302 carries the phosphoserine modification.

This sequence belongs to the peptidase M2 family. As to quaternary structure, monomer and homodimer; homodimerizes following binding to an inhibitor. Interacts with calmodulin (CALM1, CALM2 or CALM3); interaction takes place in the cytoplasmic region and regulates phosphorylation and proteolytic cleavage. Zn(2+) is required as a cofactor. Requires chloride as cofactor. Produced following proteolytic cleavage by secretase enzymes that cleave the transmembrane form in the juxtamembrane stalk region upstream of the transmembrane region. Cleavage can take place at different sites of the juxtamembrane stalk region. In terms of processing, phosphorylated by CK2 on Ser-1302; which allows membrane retention. Phosphorylated on tyrosine residues on its extracellular part, promoting cleavage by secretase enzymes and formation of the soluble form (Angiotensin-converting enzyme, soluble form).

The protein resides in the cell membrane. Its subcellular location is the cytoplasm. It is found in the secreted. It carries out the reaction Release of a C-terminal dipeptide, oligopeptide-|-Xaa-Yaa, when Xaa is not Pro, and Yaa is neither Asp nor Glu. Thus, conversion of angiotensin I to angiotensin II, with increase in vasoconstrictor activity, but no action on angiotensin II.. The catalysed reaction is angiotensin I + H2O = L-histidyl-L-leucine + angiotensin II. The enzyme catalyses bradykinin + H2O = L-Phe-L-Arg + bradykinin(1-7). It catalyses the reaction substance P + H2O = substance P(1-9) + L-Leu-L-Met-NH2. It carries out the reaction substance P + H2O = substance P(1-8) + Gly-L-Leu-L-Met-NH2. The catalysed reaction is substance P + H2O = L-Phe-L-Phe-Gly-L-Leu-L-Met-NH2 + substance P(1-6). The enzyme catalyses neurotensin + H2O = neurotensin(1-11) + L-isoleucyl-L-leucine. It catalyses the reaction goralatide + H2O = N-acetyl-L-seryl-L-aspartate + L-lysyl-L-proline. It carries out the reaction Met-enkephalin + H2O = L-phenylalanyl-L-methionine + L-tyrosylglycylglycine. The catalysed reaction is Leu-enkephalin + H2O = L-tyrosylglycylglycine + L-phenylalanyl-L-leucine. The enzyme catalyses Met-enkephalin-Arg-Phe + H2O = L-arginyl-L-phenylalanine + Met-enkephalin. With respect to regulation, the dipeptidyl carboxypeptidase activity is strongly activated by chloride. The dipeptidyl carboxypeptidase activity is specifically inhibited by lisinopril, captopril and enalaprilat. Its function is as follows. Dipeptidyl carboxypeptidase that removes dipeptides from the C-terminus of a variety of circulating hormones, such as angiotensin I, bradykinin or enkephalins, thereby playing a key role in the regulation of blood pressure, electrolyte homeostasis or synaptic plasticity. Composed of two similar catalytic domains, each possessing a functional active site, with different selectivity for substrates. Plays a major role in the angiotensin-renin system that regulates blood pressure and sodium retention by the kidney by converting angiotensin I to angiotensin II, resulting in an increase of the vasoconstrictor activity of angiotensin. Also able to inactivate bradykinin, a potent vasodilator, and therefore enhance the blood pressure response. Acts as a regulator of synaptic transmission by mediating cleavage of neuropeptide hormones, such as substance P, neurotensin or enkephalins. Catalyzes degradation of different enkephalin neuropeptides (Met-enkephalin, Leu-enkephalin, Met-enkephalin-Arg-Phe and possibly Met-enkephalin-Arg-Gly-Leu). Acts as a regulator of synaptic plasticity in the nucleus accumbens of the brain by mediating cleavage of Met-enkephalin-Arg-Phe, a strong ligand of Mu-type opioid receptor OPRM1, into Met-enkephalin. Met-enkephalin-Arg-Phe cleavage by ACE decreases activation of OPRM1, leading to long-term synaptic potentiation of glutamate release. Also acts as a regulator of hematopoietic stem cell differentiation by mediating degradation of hemoregulatory peptide N-acetyl-SDKP (AcSDKP). Acts as a regulator of cannabinoid signaling pathway by mediating degradation of hemopressin, an antagonist peptide of the cannabinoid receptor CNR1. Involved in amyloid-beta metabolism by catalyzing degradation of Amyloid-beta protein 40 and Amyloid-beta protein 42 peptides, thereby preventing plaque formation. Catalyzes cleavage of cholecystokinin (maturation of Cholecystokinin-8 and Cholecystokinin-5) and Gonadoliberin-1 (both maturation and degradation) hormones. Degradation of hemoregulatory peptide N-acetyl-SDKP (AcSDKP) and amyloid-beta proteins is mediated by the N-terminal catalytic domain, while angiotensin I and cholecystokinin cleavage is mediated by the C-terminal catalytic region. In terms of biological role, soluble form that is released in blood plasma and other body fluids following proteolytic cleavage in the juxtamembrane stalk region. This chain is Angiotensin-converting enzyme, found in Sus scrofa (Pig).